A 59-amino-acid chain; its full sequence is Early protein GP1A (59 aa).

The polypeptide is Early protein GP1A (1A) (Bacillus phage PZA (Bacteriophage PZA)).